A 360-amino-acid polypeptide reads, in one-letter code: Probable protein phosphatase 2C 54 (360 aa).

Positions M1 to R39 are disordered. Residues R65–F325 enclose the PPM-type phosphatase domain. D109, G110, D273, and D316 together coordinate Mn(2+).

This sequence belongs to the PP2C family. Mg(2+) serves as cofactor. The cofactor is Mn(2+).

The enzyme catalyses O-phospho-L-seryl-[protein] + H2O = L-seryl-[protein] + phosphate. It carries out the reaction O-phospho-L-threonyl-[protein] + H2O = L-threonyl-[protein] + phosphate. This chain is Probable protein phosphatase 2C 54, found in Oryza sativa subsp. japonica (Rice).